The chain runs to 174 residues: Methionine-R-sulfoxide reductase B2, mitochondrial (174 aa).

The transit peptide at 1-61 (MARLLRALRG…PEQFYVTREK (61 aa)) directs the protein to the mitochondrion. Residues 62–172 (GTEAPFSGMY…NSVALKFKPS (111 aa)) form the MsrB domain. Residues C82, C85, C138, and C141 each contribute to the Zn(2+) site. C161 functions as the Nucleophile in the catalytic mechanism.

The protein belongs to the MsrB Met sulfoxide reductase family. Requires Zn(2+) as cofactor.

The protein resides in the mitochondrion. It carries out the reaction L-methionyl-[protein] + [thioredoxin]-disulfide + H2O = L-methionyl-(R)-S-oxide-[protein] + [thioredoxin]-dithiol. The enzyme catalyses [thioredoxin]-disulfide + L-methionine + H2O = L-methionine (R)-S-oxide + [thioredoxin]-dithiol. In terms of biological role, methionine-sulfoxide reductase that specifically reduces methionine (R)-sulfoxide back to methionine. While in many cases, methionine oxidation is the result of random oxidation following oxidative stress, methionine oxidation is also a post-translational modification that takes place on specific residue. Upon oxidative stress, may play a role in the preservation of mitochondrial integrity by decreasing the intracellular reactive oxygen species build-up through its scavenging role, hence contributing to cell survival and protein maintenance. The chain is Methionine-R-sulfoxide reductase B2, mitochondrial (Msrb2) from Rattus norvegicus (Rat).